The chain runs to 753 residues: Protein transport protein SEC23-1 (753 aa).

The Zn(2+) site is built by Cys56, Cys61, Cys80, and Cys83.

This sequence belongs to the SEC23/SEC24 family. SEC23 subfamily. In terms of assembly, the COPII coat is composed of at least 5 proteins: the SEC23/24 complex, the SEC13/31 complex, and the protein SAR1.

Its subcellular location is the cytoplasm. It localises to the cytoplasmic vesicle. The protein resides in the COPII-coated vesicle membrane. The protein localises to the endoplasmic reticulum membrane. It is found in the golgi apparatus membrane. Its function is as follows. Component of the coat protein complex II (COPII) which promotes the formation of transport vesicles from the endoplasmic reticulum (ER). The coat has two main functions, the physical deformation of the endoplasmic reticulum membrane into vesicles and the selection of cargo molecules. The polypeptide is Protein transport protein SEC23-1 (SEC231) (Candida glabrata (strain ATCC 2001 / BCRC 20586 / JCM 3761 / NBRC 0622 / NRRL Y-65 / CBS 138) (Yeast)).